The following is a 683-amino-acid chain: Methionine--tRNA ligase (683 aa).

The 'HIGH' region signature appears at Pro-23–His-33. 4 residues coordinate Zn(2+): Cys-154, Cys-157, Cys-166, and Cys-170. The 'KMSKS' region signature appears at Lys-335–Ser-339. Lys-338 contacts ATP. The region spanning Asp-583 to Arg-683 is the tRNA-binding domain.

The protein belongs to the class-I aminoacyl-tRNA synthetase family. MetG type 1 subfamily. In terms of assembly, homodimer. It depends on Zn(2+) as a cofactor.

The protein localises to the cytoplasm. It catalyses the reaction tRNA(Met) + L-methionine + ATP = L-methionyl-tRNA(Met) + AMP + diphosphate. Its function is as follows. Is required not only for elongation of protein synthesis but also for the initiation of all mRNA translation through initiator tRNA(fMet) aminoacylation. This chain is Methionine--tRNA ligase, found in Methanocella arvoryzae (strain DSM 22066 / NBRC 105507 / MRE50).